The sequence spans 511 residues: Immunoglobulin-binding protein EibD (511 aa).

The N-terminal stretch at methionine 1 to alanine 26 is a signal peptide. Residues glutamine 27–threonine 417 are surface exposed passenger domain. Over glutamine 27–lysine 460 the chain is Extracellular. The tract at residues aspartate 161–glycine 287 is head domain. Residues threonine 288–alanine 303 are neck. The interval alanine 304–arginine 349 is right-handed coiled-coil (RHcc). Residues alanine 304–arginine 349 adopt a coiled-coil conformation. Residues glutamate 329 to glutamate 344 form a required to bind IgA region. Residues threonine 350–glycine 375 are saddle domain. Positions leucine 376–arginine 441 form a coiled coil. The interval leucine 376–arginine 441 is left-handed coiled-coil (LHcc). The interval aspartate 384–leucine 418 is required to bind IgG. Residues leucine 418 to lysine 460 form an outer membrane translocation of the passenger domain region. Beta stranded transmembrane passes span phenylalanine 461–serine 471, glutamine 474–asparagine 485, threonine 488–serine 497, and alanine 501–phenylalanine 511. The interval phenylalanine 461–phenylalanine 511 is translocator domain.

It belongs to the autotransporter-2 (AT-2) (TC 1.B.40) family. Eib subfamily. Homotrimer; can probably form mixed heterotrimers in vivo. Will form mixed heterotrimers with EibA or EibC; these are correctly located in the outer membrane and bind IgG Fc, although less well than homotrimers. In denaturing gels runs as a band of about 210 kDa. Binds the Fc portion of immunoglobulins; binds more than 1 Fc per subunit, can be modeled to bind 3 Fc per trimer.

The protein resides in the cell surface. Its subcellular location is the cell outer membrane. Its function is as follows. Binds (in a non-immune fashion) to the Fc portion of human IgA and IgG; binding occurs on the cell surface. Confers the ability to survive exposure to human serum exposure. Binds to the Fc portion of human IgG, IgA and to whole mouse antibodies also via Fc. Upon overexpression cells acquire an extra cell surface layer that forms a zipper-like contact between cells; cells autoagglutinate and form biofilm more readily, suggesting it may play a role in defense against a host. This is Immunoglobulin-binding protein EibD from Escherichia coli.